The chain runs to 330 residues: Glycerol-3-phosphate dehydrogenase [NAD(P)+] (330 aa).

Residues S11, F12, R32, and K106 each contribute to the NADPH site. The sn-glycerol 3-phosphate site is built by K106, G133, and S135. An NADPH-binding site is contributed by A137. K188, D241, S251, R252, and N253 together coordinate sn-glycerol 3-phosphate. Catalysis depends on K188, which acts as the Proton acceptor. Residue R252 participates in NADPH binding. Positions 276 and 278 each coordinate NADPH.

This sequence belongs to the NAD-dependent glycerol-3-phosphate dehydrogenase family.

Its subcellular location is the cytoplasm. The enzyme catalyses sn-glycerol 3-phosphate + NAD(+) = dihydroxyacetone phosphate + NADH + H(+). It carries out the reaction sn-glycerol 3-phosphate + NADP(+) = dihydroxyacetone phosphate + NADPH + H(+). It functions in the pathway membrane lipid metabolism; glycerophospholipid metabolism. In terms of biological role, catalyzes the reduction of the glycolytic intermediate dihydroxyacetone phosphate (DHAP) to sn-glycerol 3-phosphate (G3P), the key precursor for phospholipid synthesis. The polypeptide is Glycerol-3-phosphate dehydrogenase [NAD(P)+] (Clostridium botulinum (strain Alaska E43 / Type E3)).